Here is a 213-residue protein sequence, read N- to C-terminus: Orotidine 5'-phosphate decarboxylase (213 aa).

Residues Asp-6, Lys-25, 52–61 (DLKLADIDNT), Ser-109, 158–168 (PGVGAQGAMIG), Gly-181, and Arg-182 each bind substrate. The active-site Proton donor is the Lys-54.

It belongs to the OMP decarboxylase family. Type 1 subfamily. Homodimer.

It catalyses the reaction orotidine 5'-phosphate + H(+) = UMP + CO2. It participates in pyrimidine metabolism; UMP biosynthesis via de novo pathway; UMP from orotate: step 2/2. In terms of biological role, catalyzes the decarboxylation of orotidine 5'-monophosphate (OMP) to uridine 5'-monophosphate (UMP). This is Orotidine 5'-phosphate decarboxylase from Sulfurisphaera tokodaii (strain DSM 16993 / JCM 10545 / NBRC 100140 / 7) (Sulfolobus tokodaii).